A 344-amino-acid polypeptide reads, in one-letter code: Dihydroorotase (344 aa).

Zn(2+) is bound by residues H14 and H16. Substrate contacts are provided by residues 16–18 (HLR) and N42. The Zn(2+) site is built by K99, H136, and H174. N6-carboxylysine is present on K99. A substrate-binding site is contributed by H136. L219 lines the substrate pocket. D247 lines the Zn(2+) pocket. D247 is an active-site residue. Residues H251 and A263 each coordinate substrate.

This sequence belongs to the metallo-dependent hydrolases superfamily. DHOase family. Class II DHOase subfamily. As to quaternary structure, homodimer. Zn(2+) serves as cofactor.

The enzyme catalyses (S)-dihydroorotate + H2O = N-carbamoyl-L-aspartate + H(+). It participates in pyrimidine metabolism; UMP biosynthesis via de novo pathway; (S)-dihydroorotate from bicarbonate: step 3/3. Functionally, catalyzes the reversible cyclization of carbamoyl aspartate to dihydroorotate. This Teredinibacter turnerae (strain ATCC 39867 / T7901) protein is Dihydroorotase.